The sequence spans 147 residues: Small ribosomal subunit protein uS9 (147 aa).

The interval 128–147 (KERKKYGQMGARAKYRWSKR) is disordered.

The protein belongs to the universal ribosomal protein uS9 family.

The chain is Small ribosomal subunit protein uS9 (rpsI) from Aquifex aeolicus (strain VF5).